The sequence spans 169 residues: Endoribonuclease YbeY (169 aa).

The segment at 72-95 is disordered; that stretch reads GPVAAPRQEPDSPPACRKDSSHAE. Residues His131, His135, and His141 each contribute to the Zn(2+) site.

It belongs to the endoribonuclease YbeY family. Zn(2+) serves as cofactor.

The protein resides in the cytoplasm. Single strand-specific metallo-endoribonuclease involved in late-stage 70S ribosome quality control and in maturation of the 3' terminus of the 16S rRNA. This is Endoribonuclease YbeY from Oleidesulfovibrio alaskensis (strain ATCC BAA-1058 / DSM 17464 / G20) (Desulfovibrio alaskensis).